The primary structure comprises 990 residues: Protein argonaute 7 (990 aa).

A compositionally biased stretch (basic residues) spans 1-13 (MEEKTHHHHHSTN). The disordered stretch occupies residues 1–25 (MEEKTHHHHHSTNKHIPSSKSRTPL). One can recognise a PAZ domain in the interval 379-484 (EFLTDLPRNK…LPMELCMICE (106 aa)). Residues 649–950 (LIICVMEKKH…AAYRGRLYIE (302 aa)) form the Piwi domain. The tract at residues 953 to 973 (SESNGGSMNPSSVSRVGPPKT) is disordered. The segment covering 954–966 (ESNGGSMNPSSVS) has biased composition (polar residues).

Belongs to the argonaute family. Ago subfamily. As to expression, expressed in leaves and floral buds, and at low levels in roots.

Its function is as follows. Involved in RNA-mediated post-transcriptional gene silencing (PTGS). Main component of the RNA-induced silencing complex (RISC) that binds to a short guide RNA such as a microRNA (miRNA) or small interfering RNA (siRNA). RISC uses the mature miRNA or siRNA as a guide for slicer-directed cleavage of homologous mRNAs to repress gene expression. Required for the processing of 21 nucleotide trans-acting siRNAs (ta-siRNAs) derived from TAS3a transcripts. Associates preferentially with the microRNA (miRNA) miR390 which guides the cleavage of TAS3 precursor RNA. Seems to act as miR390 specific slicer. Associates mainly with small RNAs of 21 nucleotide in length and with a 5' terminal adenosine. Acts in the RDR6/SGS3/DCL4/AGO7 trans-acting siRNA pathway involved in leaf developmental timing. Does not seem to act on leaf polarity. Required for the production of the 30-40nt bacterial-induced long siRNAs (lsiRNA). Involved in antiviral RNA silencing by contributing to efficient viral RNAs clearance. Targets less structured viral RNAs than AGO1 which is capable of targeting RNAs with more compact structures. This is Protein argonaute 7 (AGO7) from Arabidopsis thaliana (Mouse-ear cress).